A 144-amino-acid chain; its full sequence is Universal stress protein F (144 aa).

This sequence belongs to the universal stress protein A family. As to quaternary structure, homodimer.

The sequence is that of Universal stress protein F (uspF) from Escherichia coli O157:H7.